The chain runs to 762 residues: 5-methyltetrahydropteroyltriglutamate--homocysteine methyltransferase (762 aa).

5-methyltetrahydropteroyltri-L-glutamate contacts are provided by residues 18 to 21 (REWK) and Lys-112. L-homocysteine-binding positions include 435-437 (IGS) and Glu-488. Residues 435–437 (IGS) and Glu-488 each bind L-methionine. 5-methyltetrahydropteroyltri-L-glutamate-binding positions include 519–520 (RC) and Trp-565. Asp-603 serves as a coordination point for L-homocysteine. An L-methionine-binding site is contributed by Asp-603. Position 609 (Glu-609) interacts with 5-methyltetrahydropteroyltri-L-glutamate. Residues His-645, Cys-647, and Glu-669 each contribute to the Zn(2+) site. His-698 acts as the Proton donor in catalysis. The residue at position 719 (Cys-719) is an S-bacillithiol cysteine disulfide. Cys-730 provides a ligand contact to Zn(2+).

It belongs to the vitamin-B12 independent methionine synthase family. Requires Zn(2+) as cofactor. In response to oxidative stress, Cys-719 can react with bacillithiol (BSH) to form mixed disulfides. S-bacillithiolation leads to loss of catalytic activity and methionine auxotrophy.

It carries out the reaction 5-methyltetrahydropteroyltri-L-glutamate + L-homocysteine = tetrahydropteroyltri-L-glutamate + L-methionine. The protein operates within amino-acid biosynthesis; L-methionine biosynthesis via de novo pathway; L-methionine from L-homocysteine (MetE route): step 1/1. In terms of biological role, catalyzes the transfer of a methyl group from 5-methyltetrahydrofolate to homocysteine resulting in methionine formation. The protein is 5-methyltetrahydropteroyltriglutamate--homocysteine methyltransferase of Bacillus subtilis (strain 168).